A 105-amino-acid chain; its full sequence is uncharacterized protein (105 aa).

It localises to the mitochondrion. This is an uncharacterized protein from Paramecium tetraurelia.